A 342-amino-acid polypeptide reads, in one-letter code: GTPase Obg (342 aa).

An Obg domain is found at 1–159 (MKFLDEAKVY…MWIWLRLKLI (159 aa)). The 168-residue stretch at 160–327 (ADAGLVGLPN…ALRALQTEID (168 aa)) folds into the OBG-type G domain. GTP-binding positions include 166–173 (GLPNAGKS), 191–195 (FTTLH), 212–215 (DIPG), 279–282 (SKAD), and 308–310 (SSA). Residues serine 173 and threonine 193 each contribute to the Mg(2+) site.

Belongs to the TRAFAC class OBG-HflX-like GTPase superfamily. OBG GTPase family. In terms of assembly, monomer. The cofactor is Mg(2+).

Its subcellular location is the cytoplasm. In terms of biological role, an essential GTPase which binds GTP, GDP and possibly (p)ppGpp with moderate affinity, with high nucleotide exchange rates and a fairly low GTP hydrolysis rate. Plays a role in control of the cell cycle, stress response, ribosome biogenesis and in those bacteria that undergo differentiation, in morphogenesis control. The polypeptide is GTPase Obg (Methylobacterium radiotolerans (strain ATCC 27329 / DSM 1819 / JCM 2831 / NBRC 15690 / NCIMB 10815 / 0-1)).